Reading from the N-terminus, the 100-residue chain is Large ribosomal subunit protein uL23 (100 aa).

The protein belongs to the universal ribosomal protein uL23 family. As to quaternary structure, part of the 50S ribosomal subunit. Contacts protein L29, and trigger factor when it is bound to the ribosome.

Functionally, one of the early assembly proteins it binds 23S rRNA. One of the proteins that surrounds the polypeptide exit tunnel on the outside of the ribosome. Forms the main docking site for trigger factor binding to the ribosome. This is Large ribosomal subunit protein uL23 from Shewanella oneidensis (strain ATCC 700550 / JCM 31522 / CIP 106686 / LMG 19005 / NCIMB 14063 / MR-1).